Consider the following 359-residue polypeptide: Fructose-bisphosphate aldolase (359 aa).

Residue serine 62 coordinates D-glyceraldehyde 3-phosphate. Aspartate 109 acts as the Proton donor in catalysis. Residues histidine 110, aspartate 144, glutamate 174, and histidine 226 each coordinate Zn(2+). Glycine 227 serves as a coordination point for dihydroxyacetone phosphate. Histidine 265 contacts Zn(2+). Residues 266 to 268 and 287 to 290 each bind dihydroxyacetone phosphate; these read GGS and NLDT.

It belongs to the class II fructose-bisphosphate aldolase family. As to quaternary structure, homodimer. The cofactor is Zn(2+).

It is found in the cytoplasm. It catalyses the reaction beta-D-fructose 1,6-bisphosphate = D-glyceraldehyde 3-phosphate + dihydroxyacetone phosphate. It participates in carbohydrate degradation; glycolysis; D-glyceraldehyde 3-phosphate and glycerone phosphate from D-glucose: step 4/4. Catalyzes the aldol condensation of dihydroxyacetone phosphate (DHAP or glycerone-phosphate) with glyceraldehyde 3-phosphate (G3P) to form fructose 1,6-bisphosphate (FBP) in gluconeogenesis and the reverse reaction in glycolysis. This is Fructose-bisphosphate aldolase (FBA1) from Candida albicans (strain SC5314 / ATCC MYA-2876) (Yeast).